Reading from the N-terminus, the 276-residue chain is Diaminopimelate epimerase (276 aa).

Residues Asn13, Gln46, and Asn66 each contribute to the substrate site. Cys75 acts as the Proton donor in catalysis. Substrate contacts are provided by residues 76 to 77 (GN), Asn159, Asn192, and 210 to 211 (ER). The active-site Proton acceptor is the Cys219. Residue 220–221 (GT) participates in substrate binding.

The protein belongs to the diaminopimelate epimerase family. Homodimer.

The protein resides in the cytoplasm. The catalysed reaction is (2S,6S)-2,6-diaminopimelate = meso-2,6-diaminopimelate. The protein operates within amino-acid biosynthesis; L-lysine biosynthesis via DAP pathway; DL-2,6-diaminopimelate from LL-2,6-diaminopimelate: step 1/1. Its function is as follows. Catalyzes the stereoinversion of LL-2,6-diaminopimelate (L,L-DAP) to meso-diaminopimelate (meso-DAP), a precursor of L-lysine and an essential component of the bacterial peptidoglycan. The chain is Diaminopimelate epimerase from Aeromonas salmonicida (strain A449).